Here is a 171-residue protein sequence, read N- to C-terminus: Serine acetyltransferase (171 aa).

Belongs to the transferase hexapeptide repeat family.

Its subcellular location is the cytoplasm. It catalyses the reaction L-serine + acetyl-CoA = O-acetyl-L-serine + CoA. Its pathway is amino-acid biosynthesis; L-cysteine biosynthesis; L-cysteine from L-serine: step 1/2. The polypeptide is Serine acetyltransferase (cysE) (Helicobacter pylori (strain ATCC 700392 / 26695) (Campylobacter pylori)).